The chain runs to 292 residues: Probable ABC transporter permease protein PH1215 (292 aa).

Helical transmembrane passes span I10–V30, L72–L92, I106–Y126, I160–I180, L215–L235, and F261–P281. Residues L68–Y284 form the ABC transmembrane type-1 domain.

Belongs to the binding-protein-dependent transport system permease family. MalFG subfamily.

Its subcellular location is the cell membrane. In terms of biological role, probably part of a binding-protein-dependent transport system PH1214/15/16. Probably responsible for the translocation of the substrate across the membrane. This is Probable ABC transporter permease protein PH1215 from Pyrococcus horikoshii (strain ATCC 700860 / DSM 12428 / JCM 9974 / NBRC 100139 / OT-3).